The primary structure comprises 92 residues: MPRSLKKGPFIDFHLLKKIEEIKQTGKKKLIRTWSRRSTIFPDMIGMTISVHNGKQHIPIFIGDEMVGHKLGEFVPTRTYRGHSADKKIKKR.

This sequence belongs to the universal ribosomal protein uS19 family.

Its function is as follows. Protein S19 forms a complex with S13 that binds strongly to the 16S ribosomal RNA. The chain is Small ribosomal subunit protein uS19 from Wigglesworthia glossinidia brevipalpis.